The following is an 82-amino-acid chain: Cell division topological specificity factor (82 aa).

Belongs to the MinE family.

Its function is as follows. Prevents the cell division inhibition by proteins MinC and MinD at internal division sites while permitting inhibition at polar sites. This ensures cell division at the proper site by restricting the formation of a division septum at the midpoint of the long axis of the cell. This chain is Cell division topological specificity factor, found in Hahella chejuensis (strain KCTC 2396).